A 287-amino-acid chain; its full sequence is Aquaporin PIP2-1 (287 aa).

An N-acetylmethionine modification is found at Met1. The Cytoplasmic segment spans residues 2–39 (AKDVEAVPGEGFQTRDYQDPPPAPFIDGAELKKWSFYR). At Lys3 the chain carries N6,N6-dimethyllysine; partial. Residues 40–60 (AVIAEFVATLLFLYITVLTVI) form a helical membrane-spanning segment. The Extracellular portion of the chain corresponds to 61–83 (GYKIQSDTDAGGVDCGGVGILGI). The helical transmembrane segment at 84-104 (AWAFGGMIFILVYCTAGISGG) threads the bilayer. Over 105 to 125 (HINPAVTFGLFLARKVSLPRA) the chain is Cytoplasmic. The NPA 1 signature appears at 107-109 (NPA). A helical transmembrane segment spans residues 126-146 (LLYIIAQCLGAICGVGFVKAF). Topologically, residues 147–167 (QSSYYTRYGGGANSLADGYST) are extracellular. Residues 168-188 (GTGLAAEIIGTFVLVYTVFSA) traverse the membrane as a helical segment. Residues 189–201 (TDPKRSARDSHVP) are Cytoplasmic-facing. The helical transmembrane segment at 202 to 222 (VLAPLPIGFAVFMVHLATIPI) threads the bilayer. Residues 223-249 (TGTGINPARSFGAAVIYNKSKPWDDHW) lie on the Extracellular side of the membrane. The NPA 2 motif lies at 228-230 (NPA). Residues 250-270 (IFWVGPFIGAAIAAFYHQFVL) form a helical membrane-spanning segment. The Cytoplasmic portion of the chain corresponds to 271 to 287 (RASGSKSLGSFRSAANV). Ser280 and Ser283 each carry phosphoserine.

Belongs to the MIP/aquaporin (TC 1.A.8) family. PIP (TC 1.A.8.11) subfamily. Post-translationally, ubiquitinated by RMA1, leading to proteasomal degradation. The phosphorylation at Ser-280 and Ser-283 is altered by salt (NaCl) and hydrogen peroxide H(2)O(2) treatments. Phosphorylation of Ser-283 is required for plasma membrane targeting. In terms of tissue distribution, predominantly expressed in roots and green siliques. Also expressed at lower level above ground and in flower buds.

It is found in the cell membrane. Water channel required to facilitate the transport of water across cell membrane. Probably involved in root water uptake. Its function is impaired by Hg(2+). The chain is Aquaporin PIP2-1 (PIP2-1) from Arabidopsis thaliana (Mouse-ear cress).